We begin with the raw amino-acid sequence, 172 residues long: Protein-export protein SecB (172 aa).

This sequence belongs to the SecB family. Homotetramer, a dimer of dimers. One homotetramer interacts with 1 SecA dimer.

It is found in the cytoplasm. One of the proteins required for the normal export of preproteins out of the cell cytoplasm. It is a molecular chaperone that binds to a subset of precursor proteins, maintaining them in a translocation-competent state. It also specifically binds to its receptor SecA. The sequence is that of Protein-export protein SecB from Xylella fastidiosa (strain 9a5c).